Here is a 941-residue protein sequence, read N- to C-terminus: Isoleucine--tRNA ligase (941 aa).

A 'HIGH' region motif is present at residues Pro-58–His-68. Glu-564 lines the L-isoleucyl-5'-AMP pocket. The short motif at Lys-605–Ser-609 is the 'KMSKS' region element. Lys-608 is a binding site for ATP. Zn(2+) contacts are provided by Cys-904, Cys-907, Cys-924, and Cys-927.

This sequence belongs to the class-I aminoacyl-tRNA synthetase family. IleS type 1 subfamily. In terms of assembly, monomer. It depends on Zn(2+) as a cofactor.

Its subcellular location is the cytoplasm. It carries out the reaction tRNA(Ile) + L-isoleucine + ATP = L-isoleucyl-tRNA(Ile) + AMP + diphosphate. Functionally, catalyzes the attachment of isoleucine to tRNA(Ile). As IleRS can inadvertently accommodate and process structurally similar amino acids such as valine, to avoid such errors it has two additional distinct tRNA(Ile)-dependent editing activities. One activity is designated as 'pretransfer' editing and involves the hydrolysis of activated Val-AMP. The other activity is designated 'posttransfer' editing and involves deacylation of mischarged Val-tRNA(Ile). This chain is Isoleucine--tRNA ligase, found in Buchnera aphidicola subsp. Cinara cedri (strain Cc).